The chain runs to 103 residues: Small ribosomal subunit protein uS10c (103 aa).

Belongs to the universal ribosomal protein uS10 family. In terms of assembly, part of the 30S ribosomal subunit.

It localises to the plastid. It is found in the chloroplast. Functionally, involved in the binding of tRNA to the ribosomes. This chain is Small ribosomal subunit protein uS10c, found in Trieres chinensis (Marine centric diatom).